We begin with the raw amino-acid sequence, 205 residues long: Guanylate kinase (205 aa).

The Guanylate kinase-like domain occupies 7-185 (GNIFIISAAS…AEGDLLHIVN (179 aa)). 14-21 (AASGTGKT) is a binding site for ATP.

It belongs to the guanylate kinase family.

Its subcellular location is the cytoplasm. The enzyme catalyses GMP + ATP = GDP + ADP. Its function is as follows. Essential for recycling GMP and indirectly, cGMP. The polypeptide is Guanylate kinase (Neisseria gonorrhoeae (strain ATCC 700825 / FA 1090)).